The chain runs to 829 residues: Ent-cassa-12,15-diene synthase (829 aa).

Residues 1–50 form a disordered region; it reads MMLLGSPSSGGYGGKFAGASPAGGTTTMAPSAKQPSSRAPPPGITGGRND. The span at 23–37 shows a compositional bias: polar residues; that stretch reads GGTTTMAPSAKQPSS. Positions 576, 580, 720, and 728 each coordinate Mg(2+). Residues 576–580 carry the DDXXD motif motif; sequence DDLFD.

This sequence belongs to the terpene synthase family. Mg(2+) serves as cofactor. Expressed in roots and stems.

It carries out the reaction ent-copalyl diphosphate = ent-cassa-12,15-diene + diphosphate. Involved in phytocassane phytoalexins biosynthesis. Catalyzes the conversion of ent-copalyl diphosphate to the phytoalexin precursor ent-cassa-12,15-diene. This chain is Ent-cassa-12,15-diene synthase (KSL7), found in Oryza sativa subsp. japonica (Rice).